Here is a 324-residue protein sequence, read N- to C-terminus: NADH-quinone oxidoreductase subunit H 2 (324 aa).

9 helical membrane-spanning segments follow: residues 1-21 (MIGM…LLVV), 77-97 (ILAP…VAFG), 109-129 (VMFL…GALA), 147-167 (LGYE…AGSL), 179-199 (VWFV…GVAA), 214-234 (LVAG…FLGE), 238-258 (VLLV…GPVW), 263-283 (LPGP…FIWI), and 298-318 (FAWK…GLIV).

It belongs to the complex I subunit 1 family. NDH-1 is composed of 14 different subunits. Subunits NuoA, H, J, K, L, M, N constitute the membrane sector of the complex.

The protein resides in the cell inner membrane. It catalyses the reaction a quinone + NADH + 5 H(+)(in) = a quinol + NAD(+) + 4 H(+)(out). Its function is as follows. NDH-1 shuttles electrons from NADH, via FMN and iron-sulfur (Fe-S) centers, to quinones in the respiratory chain. The immediate electron acceptor for the enzyme in this species is believed to be ubiquinone. Couples the redox reaction to proton translocation (for every two electrons transferred, four hydrogen ions are translocated across the cytoplasmic membrane), and thus conserves the redox energy in a proton gradient. This subunit may bind ubiquinone. The chain is NADH-quinone oxidoreductase subunit H 2 from Rhodopseudomonas palustris (strain BisB18).